Here is a 320-residue protein sequence, read N- to C-terminus: Fe-S cluster assembly protein dre2 (320 aa).

Residues 1-130 are N-terminal SAM-like domain; it reads MAKQTLLLSP…KPDIEEMQAV (130 aa). A linker region spans residues 131–213; the sequence is PLRLGRKNDH…DNLLDDSELS (83 aa). Positions 141 to 166 are disordered; it reads LAGAPSLEGSAAEHPFPPEVSEGKTA. Residues Cys-222, Cys-233, Cys-236, and Cys-238 each contribute to the [2Fe-2S] cluster site. The segment at 222–238 is fe-S binding site A; sequence CRPKAGKRRRACKDCTC. Residues Cys-283, Cys-286, Cys-294, and Cys-297 each coordinate [4Fe-4S] cluster. Short sequence motifs (cx2C motif) lie at residues 283–286 and 294–297; these read CGNC and CEGC. The interval 283–297 is fe-S binding site B; the sequence is CGNCSLGDAFRCEGC.

This sequence belongs to the anamorsin family. As to quaternary structure, monomer. Interacts with tah18. Interacts with mia40. Requires [2Fe-2S] cluster as cofactor. [4Fe-4S] cluster is required as a cofactor.

It localises to the cytoplasm. It is found in the mitochondrion intermembrane space. Functionally, component of the cytosolic iron-sulfur (Fe-S) protein assembly (CIA) machinery required for the maturation of extramitochondrial Fe-S proteins. Part of an electron transfer chain functioning in an early step of cytosolic Fe-S biogenesis, facilitating the de novo assembly of a [4Fe-4S] cluster on the scaffold complex cfd1-nbp35. Electrons are transferred to dre2 from NADPH via the FAD- and FMN-containing protein tah18. Tah18-dre2 are also required for the assembly of the diferric tyrosyl radical cofactor of ribonucleotide reductase (RNR), probably by providing electrons for reduction during radical cofactor maturation in the catalytic small subunit rnr2. This chain is Fe-S cluster assembly protein dre2, found in Neosartorya fischeri (strain ATCC 1020 / DSM 3700 / CBS 544.65 / FGSC A1164 / JCM 1740 / NRRL 181 / WB 181) (Aspergillus fischerianus).